We begin with the raw amino-acid sequence, 274 residues long: Urease accessory protein UreD (274 aa).

The protein belongs to the UreD family. UreD, UreF and UreG form a complex that acts as a GTP-hydrolysis-dependent molecular chaperone, activating the urease apoprotein by helping to assemble the nickel containing metallocenter of UreC. The UreE protein probably delivers the nickel.

The protein resides in the cytoplasm. Required for maturation of urease via the functional incorporation of the urease nickel metallocenter. This chain is Urease accessory protein UreD, found in Klebsiella pneumoniae subsp. pneumoniae (strain ATCC 700721 / MGH 78578).